Here is a 360-residue protein sequence, read N- to C-terminus: DNA replication and repair protein RecF (360 aa).

Gly-30–Thr-37 is an ATP binding site.

Belongs to the RecF family.

The protein localises to the cytoplasm. Functionally, the RecF protein is involved in DNA metabolism; it is required for DNA replication and normal SOS inducibility. RecF binds preferentially to single-stranded, linear DNA. It also seems to bind ATP. The chain is DNA replication and repair protein RecF from Shewanella denitrificans (strain OS217 / ATCC BAA-1090 / DSM 15013).